Here is a 218-residue protein sequence, read N- to C-terminus: Casparian strip membrane protein 5 (218 aa).

Residues 1–26 are disordered; it reads MDSGKEGEAPAATSSPESRRTRSNGK. Over 1-58 the chain is Cytoplasmic; sequence MDSGKEGEAPAATSSPESRRTRSNGKVKAFADAAPPSATVVSTKATPLPRGGWKKGVA. The chain crosses the membrane as a helical span at residues 59 to 79; it reads ILDFIIRLGAIGSALGAAAIM. The Extracellular segment spans residues 80–106; the sequence is GNSEQILPFFTQFFQFHAQWDDFPMFQ. A helical membrane pass occupies residues 107-127; that stretch reads FFVFANGAAGGFLILSLPFSI. The Cytoplasmic portion of the chain corresponds to 128–139; the sequence is VCIVRPYTVGPR. The helical transmembrane segment at 140-160 threads the bilayer; it reads LLLVILDILMMALVMAAASSA. Topologically, residues 161 to 192 are extracellular; that stretch reads AAVVYLAHNGSQDANWIAICQQFTDFCQVTSE. N-linked (GlcNAc...) asparagine glycosylation is present at Asn169. Residues 193-213 form a helical membrane-spanning segment; sequence AVVASFVAAFLLICLIVVSSV. Topologically, residues 214-218 are cytoplasmic; the sequence is ALKRG.

Belongs to the Casparian strip membrane proteins (CASP) family. Homodimer and heterodimers.

It is found in the cell membrane. Functionally, regulates membrane-cell wall junctions and localized cell wall deposition. Required for establishment of the Casparian strip membrane domain (CSD) and the subsequent formation of Casparian strips, a cell wall modification of the root endodermis that determines an apoplastic barrier between the intraorganismal apoplasm and the extraorganismal apoplasm and prevents lateral diffusion. This is Casparian strip membrane protein 5 from Glycine max (Soybean).